We begin with the raw amino-acid sequence, 192 residues long: Signal peptidase complex catalytic subunit SEC11C (192 aa).

Residues methionine 1–arginine 28 lie on the Cytoplasmic side of the membrane. Residues glutamine 29–tryptophan 48 traverse the membrane as a helical; Signal-anchor for type II membrane protein segment. The Lumenal segment spans residues lysine 49 to serine 192. Active-site charge relay system residues include serine 68, histidine 108, and aspartate 134. The interval alanine 177 to leucine 188 is C-terminal short (CTS) helix.

The protein belongs to the peptidase S26B family. Component of the signal peptidase complex paralog C (SPC-C) composed of a catalytic subunit SEC11C and three accessory subunits SPCS1, SPCS2 and SPCS3. Within the complex, interacts with SPCS2 and SPCS3. The complex induces a local thinning of the ER membrane which is used to measure the length of the signal peptide (SP) h-region of protein substrates. This ensures the selectivity of the complex towards h-regions shorter than 18-20 amino acids. May undergo processing at the N-terminus.

The protein resides in the endoplasmic reticulum membrane. It catalyses the reaction Cleavage of hydrophobic, N-terminal signal or leader sequences from secreted and periplasmic proteins.. Functionally, catalytic component of the signal peptidase complex (SPC) which catalyzes the cleavage of N-terminal signal sequences from nascent proteins as they are translocated into the lumen of the endoplasmic reticulum. Specifically cleaves N-terminal signal peptides that contain a hydrophobic alpha-helix (h-region) shorter than 18-20 amino acids. This chain is Signal peptidase complex catalytic subunit SEC11C (Sec11c), found in Mus musculus (Mouse).